The chain runs to 288 residues: Phosphatidylserine decarboxylase proenzyme (288 aa).

Catalysis depends on charge relay system; for autoendoproteolytic cleavage activity residues Asp-92, His-149, and Ser-254. The active-site Schiff-base intermediate with substrate; via pyruvic acid; for decarboxylase activity is Ser-254. Position 254 is a pyruvic acid (Ser); by autocatalysis (Ser-254).

The protein belongs to the phosphatidylserine decarboxylase family. PSD-B subfamily. Prokaryotic type I sub-subfamily. Heterodimer of a large membrane-associated beta subunit and a small pyruvoyl-containing alpha subunit. The cofactor is pyruvate. Is synthesized initially as an inactive proenzyme. Formation of the active enzyme involves a self-maturation process in which the active site pyruvoyl group is generated from an internal serine residue via an autocatalytic post-translational modification. Two non-identical subunits are generated from the proenzyme in this reaction, and the pyruvate is formed at the N-terminus of the alpha chain, which is derived from the carboxyl end of the proenzyme. The autoendoproteolytic cleavage occurs by a canonical serine protease mechanism, in which the side chain hydroxyl group of the serine supplies its oxygen atom to form the C-terminus of the beta chain, while the remainder of the serine residue undergoes an oxidative deamination to produce ammonia and the pyruvoyl prosthetic group on the alpha chain. During this reaction, the Ser that is part of the protease active site of the proenzyme becomes the pyruvoyl prosthetic group, which constitutes an essential element of the active site of the mature decarboxylase.

Its subcellular location is the cell membrane. It carries out the reaction a 1,2-diacyl-sn-glycero-3-phospho-L-serine + H(+) = a 1,2-diacyl-sn-glycero-3-phosphoethanolamine + CO2. The protein operates within phospholipid metabolism; phosphatidylethanolamine biosynthesis; phosphatidylethanolamine from CDP-diacylglycerol: step 2/2. Catalyzes the formation of phosphatidylethanolamine (PtdEtn) from phosphatidylserine (PtdSer). This is Phosphatidylserine decarboxylase proenzyme from Bordetella petrii (strain ATCC BAA-461 / DSM 12804 / CCUG 43448).